A 296-amino-acid polypeptide reads, in one-letter code: MMSRDLDIANPARTRAIMHTYGLQVKKSLGQNFLTDQNVLHNIVATADIGTNDNVIEIGPGIGALTEYLARAAHHVLAFEIDDRLLPILDETLADYDNVTVVNQDILKADLAAMISEHLDNERPLKLVANLPYYITTPILMNILAGDVAFENIVVMMQKEVADRLAAEPGTKAYGALTIAVQYRMAAEMAMVVPRTVFVPSPNVDSAIVKLTALPLRTHVPFDEAAFFKVVKAGFAHRRKNLWNNLQSLFGKQPETKTAIQQALDIATIDPKIRAERLTVDEFITLTDALHQADLL.

Residues N32, L34, G59, E80, D105, and N130 each contribute to the S-adenosyl-L-methionine site.

The protein belongs to the class I-like SAM-binding methyltransferase superfamily. rRNA adenine N(6)-methyltransferase family. RsmA subfamily.

Its subcellular location is the cytoplasm. The catalysed reaction is adenosine(1518)/adenosine(1519) in 16S rRNA + 4 S-adenosyl-L-methionine = N(6)-dimethyladenosine(1518)/N(6)-dimethyladenosine(1519) in 16S rRNA + 4 S-adenosyl-L-homocysteine + 4 H(+). Its function is as follows. Specifically dimethylates two adjacent adenosines (A1518 and A1519) in the loop of a conserved hairpin near the 3'-end of 16S rRNA in the 30S particle. May play a critical role in biogenesis of 30S subunits. This chain is Ribosomal RNA small subunit methyltransferase A, found in Lactiplantibacillus plantarum (strain ATCC BAA-793 / NCIMB 8826 / WCFS1) (Lactobacillus plantarum).